A 126-amino-acid polypeptide reads, in one-letter code: uncharacterized protein (126 aa).

Basic residues-rich tracts occupy residues 21 to 31 (RKKRKKRKKRR) and 41 to 83 (RILK…RKRR). The tract at residues 21–83 (RKKRKKRKKR…RSPRKRRKRR (63 aa)) is disordered.

This is an uncharacterized protein from Saccharomyces cerevisiae (strain ATCC 204508 / S288c) (Baker's yeast).